Consider the following 238-residue polypeptide: uncharacterized protein (238 aa).

The tract at residues 1–20 (MPNLHSLPLGTRPENAIRNN) is disordered.

The protein belongs to the PEP2 family.

This is an uncharacterized protein from Emericella nidulans (strain FGSC A4 / ATCC 38163 / CBS 112.46 / NRRL 194 / M139) (Aspergillus nidulans).